The following is a 321-amino-acid chain: Mas-related G-protein coupled receptor member H (321 aa).

Over 1-35 (MEPLATTLCPQECTQTTRNETPNETTWSSEHVTKY) the chain is Extracellular. A glycan (N-linked (GlcNAc...) asparagine) is linked at N23. The chain crosses the membrane as a helical span at residues 36 to 56 (TYISISLVICSLGLVGNGLLI). Residues 57-71 (WFLIFCIKRKPFTIY) are Cytoplasmic-facing. Residues 72-92 (ILHLAFADFMVLLCSSIIQLV) form a helical membrane-spanning segment. The Extracellular segment spans residues 93 to 102 (NTFHIYDSTL). The helical transmembrane segment at 103 to 126 (VSYAVLFMIFGYNTGLHLLTAISV) threads the bilayer. Residues 127–147 (ERCLSVLYPIWYHCRRPKHQS) lie on the Cytoplasmic side of the membrane. A helical membrane pass occupies residues 148–168 (TVACTLLWALSVLVSGLENFF). The Extracellular segment spans residues 169–188 (CILEVKPQFPECRYVYIFSC). The chain crosses the membrane as a helical span at residues 189-209 (TLTFLVFVPLMVFSNLILFIQ). Topologically, residues 210 to 225 (VCCNLKPRQPAKLYVI) are cytoplasmic. Residues 226-246 (IMATVILFLVFAMPMKVLLII) traverse the membrane as a helical segment. Position 247 (G247) is a topological domain, extracellular. Residues 248 to 271 (YYSNSTDASVWKSLPYLNMLSTIN) form a helical membrane-spanning segment. Over 272-320 (CSINPIVYFVVGSLRRKRSRKSLKEALQKVFEEKPVVASRENEVQFSLP) the chain is Cytoplasmic.

This sequence belongs to the G-protein coupled receptor 1 family. Mas subfamily.

It is found in the cell membrane. Its function is as follows. Orphan receptor. May regulate nociceptor function and/or development, including the sensation or modulation of pain. This Rattus norvegicus (Rat) protein is Mas-related G-protein coupled receptor member H (Mrgprh).